The following is a 271-amino-acid chain: Orotidine 5'-phosphate decarboxylase (271 aa).

Residue lysine 97 is the Proton donor of the active site.

This sequence belongs to the OMP decarboxylase family. Type 2 subfamily.

The enzyme catalyses orotidine 5'-phosphate + H(+) = UMP + CO2. Its pathway is pyrimidine metabolism; UMP biosynthesis via de novo pathway; UMP from orotate: step 2/2. The protein is Orotidine 5'-phosphate decarboxylase of Leptospira borgpetersenii serovar Hardjo-bovis (strain JB197).